The sequence spans 63 residues: Large ribosomal subunit protein uL29 (63 aa).

This sequence belongs to the universal ribosomal protein uL29 family.

The protein is Large ribosomal subunit protein uL29 of Salmonella agona (strain SL483).